The primary structure comprises 638 residues: Meiosis initiator protein (638 aa).

Disordered regions lie at residues 1 to 21 (MFGSSRYLGSSEQPRANSLGP), 60 to 79 (NQRNQNKLLSPNKKQRKNHT), 138 to 249 (LAGL…KGGQ), 404 to 433 (PSAYTQEAPQEKDTASKAPKDPPESHSLHR), and 447 to 537 (GNSK…PCPP). The span at 7 to 20 (YLGSSEQPRANSLG) shows a compositional bias: polar residues. The basic motif; degenerate stretch occupies residues 62-75 (RNQNKLLSPNKKQR). The bHLH domain occupies 62–116 (RNQNKLLSPNKKQRKNHTSKLQELALLLPIALKTGTKKLTKKEILVHVLQYIQYL). The tract at residues 76 to 116 (KNHTSKLQELALLLPIALKTGTKKLTKKEILVHVLQYIQYL) is helix-loop-helix motif. A compositionally biased stretch (low complexity) spans 157 to 167 (TPSSSPSSQKS). Polar residues predominate over residues 182-191 (TQASESQTRT). Residues 412–430 (PQEKDTASKAPKDPPESHS) show a composition bias toward basic and acidic residues. Low complexity predominate over residues 453–465 (SSSSSSSSSSSSS). Residues 528–537 (KEKKKGPCPP) are compositionally biased toward basic residues. Positions 540-608 (KKKCVNGFIM…QHNRIVKQDG (69 aa)) form a DNA-binding region, HMG box.

Interacts with STRA8.

The protein resides in the nucleus. Its function is as follows. Gatekeeper of meiotic initiation in both male and female germ cells. In complex with STRA8, directly activates the transcription of a subset of critical meiotic genes playing a central role in cell-cycle switching from mitosis to meiosis. Temporal expression of MEIOSIN is required for meiotic entry decision. This is Meiosis initiator protein from Homo sapiens (Human).